The following is a 197-amino-acid chain: Nucleoid occlusion factor SlmA (197 aa).

Residues 6 to 66 (NDRRTQILQA…GLIEFIEESL (61 aa)) enclose the HTH tetR-type domain. The H-T-H motif DNA-binding region spans 29–48 (TTAALAKQVGVSEAALYRHF).

This sequence belongs to the nucleoid occlusion factor SlmA family. In terms of assembly, homodimer. Interacts with FtsZ.

The protein resides in the cytoplasm. Its subcellular location is the nucleoid. Required for nucleoid occlusion (NO) phenomenon, which prevents Z-ring formation and cell division over the nucleoid. Acts as a DNA-associated cell division inhibitor that binds simultaneously chromosomal DNA and FtsZ, and disrupts the assembly of FtsZ polymers. SlmA-DNA-binding sequences (SBS) are dispersed on non-Ter regions of the chromosome, preventing FtsZ polymerization at these regions. The chain is Nucleoid occlusion factor SlmA from Marinomonas sp. (strain MWYL1).